The following is a 107-amino-acid chain: Precursor of CEP14 (107 aa).

A signal peptide spans 1–21 (MAVRLIPTIWLFIVFAVIVSA). Residues 22 to 92 (LPSLVSSRKL…GKLRSRHLST (71 aa)) constitute a propeptide that is removed on maturation. The N-linked (GlcNAc...) asparagine glycan is linked to asparagine 39. The tract at residues 43–76 (REEEKSHMPHVTKTSTLSALPKGKIPNSTPSKKG) is disordered. 2 positions are modified to hydroxyproline: proline 101 and proline 103.

This sequence belongs to the C-terminally encoded plant signaling peptide (CEP) family. In terms of assembly, interacts with CEP receptors (e.g. CEPR1 and CEPR2). The mature small signaling peptide is generated by proteolytic processing of the longer precursor.

The protein localises to the secreted. It is found in the extracellular space. It localises to the apoplast. Extracellular signaling peptide that may regulate primary root growth rate and systemic nitrogen (N)-demand signaling. This is Precursor of CEP14 from Arabidopsis thaliana (Mouse-ear cress).